Reading from the N-terminus, the 405-residue chain is Indoleamine 2,3-dioxygenase 2 (405 aa).

A heme-binding site is contributed by His347.

Belongs to the indoleamine 2,3-dioxygenase family. Requires heme as cofactor. In terms of tissue distribution, expressed mainly in antigen-presenting immune cells, liver, kidney, brain, and placenta. Highly expressed in kidney, followed by epididymis and liver (at protein level). Detected in the tails of the spermatozoa in the testis and in the kidney tubules (at protein level). Constitutively expressed in brain.

The catalysed reaction is L-tryptophan + O2 = N-formyl-L-kynurenine. The protein operates within amino-acid degradation; L-tryptophan degradation via kynurenine pathway; L-kynurenine from L-tryptophan: step 1/2. Activity is inhibited by D-1MT (1-methyl-D-tryptophan) and MTH-trp (methylthiohydantoin-DL-tryptophan) but not L-1MT (1-methyl-L-tryptophan). Its function is as follows. Catalyzes the first and rate-limiting step in the kynurenine pathway of tryptophan catabolism. Involved in immune regulation. This Mus musculus (Mouse) protein is Indoleamine 2,3-dioxygenase 2.